The following is a 239-amino-acid chain: Demethylmenaquinone methyltransferase (239 aa).

S-adenosyl-L-methionine is bound by residues Thr-60, Asp-81, and 106-107; that span reads DA.

Belongs to the class I-like SAM-binding methyltransferase superfamily. MenG/UbiE family.

It catalyses the reaction a 2-demethylmenaquinol + S-adenosyl-L-methionine = a menaquinol + S-adenosyl-L-homocysteine + H(+). Its pathway is quinol/quinone metabolism; menaquinone biosynthesis; menaquinol from 1,4-dihydroxy-2-naphthoate: step 2/2. In terms of biological role, methyltransferase required for the conversion of demethylmenaquinol (DMKH2) to menaquinol (MKH2). This Staphylococcus haemolyticus (strain JCSC1435) protein is Demethylmenaquinone methyltransferase.